A 642-amino-acid polypeptide reads, in one-letter code: uncharacterized protein (642 aa).

Residues Glu-15 and Asp-118 each coordinate Mg(2+). The region spanning 29–149 (VCVDTCVVID…YNLAKAQGIE (121 aa)) is the PINc domain. The region spanning 510–578 (DNSIDLIVPE…ELESTRIYET (69 aa)) is the KH domain.

In the N-terminal section; belongs to the PINc/VapC protein family. Requires Mg(2+) as cofactor.

This is an uncharacterized protein from Methanocaldococcus jannaschii (strain ATCC 43067 / DSM 2661 / JAL-1 / JCM 10045 / NBRC 100440) (Methanococcus jannaschii).